A 58-amino-acid polypeptide reads, in one-letter code: MSDGMKDKAKAIGKKIKGEAKDQWGSATDDPQRKAEGKRDKAKGEAQDTIADAKNNNK.

Composition is skewed to basic and acidic residues over residues 1 to 22 (MSDGMKDKAKAIGKKIKGEAKD) and 30 to 46 (DPQRKAEGKRDKAKGEA). Positions 1–58 (MSDGMKDKAKAIGKKIKGEAKDQWGSATDDPQRKAEGKRDKAKGEAQDTIADAKNNNK) are disordered.

This sequence belongs to the UPF0337 (CsbD) family.

In Oceanobacillus iheyensis (strain DSM 14371 / CIP 107618 / JCM 11309 / KCTC 3954 / HTE831), this protein is UPF0337 protein OB2685.